The chain runs to 362 residues: tRNA/tmRNA (uracil-C(5))-methyltransferase (362 aa).

Positions 182, 210, 215, 231, and 293 each coordinate S-adenosyl-L-methionine. The active-site Nucleophile is the Cys-318. Glu-352 functions as the Proton acceptor in the catalytic mechanism.

Belongs to the class I-like SAM-binding methyltransferase superfamily. RNA M5U methyltransferase family. TrmA subfamily.

The catalysed reaction is uridine(54) in tRNA + S-adenosyl-L-methionine = 5-methyluridine(54) in tRNA + S-adenosyl-L-homocysteine + H(+). It carries out the reaction uridine(341) in tmRNA + S-adenosyl-L-methionine = 5-methyluridine(341) in tmRNA + S-adenosyl-L-homocysteine + H(+). In terms of biological role, dual-specificity methyltransferase that catalyzes the formation of 5-methyluridine at position 54 (m5U54) in all tRNAs, and that of position 341 (m5U341) in tmRNA (transfer-mRNA). The sequence is that of tRNA/tmRNA (uracil-C(5))-methyltransferase from Neisseria meningitidis serogroup B (strain ATCC BAA-335 / MC58).